Here is a 390-residue protein sequence, read N- to C-terminus: Heparan sulfate glucosamine 3-O-sulfotransferase 3B1 (390 aa).

The disordered stretch occupies residues 1 to 25 (MGQRLSGGRSCLDVPGRFLPQPPPP). At 1-32 (MGQRLSGGRSCLDVPGRFLPQPPPPPPPVRRK) the chain is on the cytoplasmic side. Residues 33 to 53 (LALLFAMLCIWLYMFLYSCAG) form a helical; Signal-anchor for type II membrane protein membrane-spanning segment. The Lumenal segment spans residues 54 to 390 (SCTAAPGLLL…QMTGRDFGWD (337 aa)). Residues 79–125 (TAPNETSPKMPFRAPPANSLAAGKDKTVGAGSQEEQSPEAPDSPSPI) are disordered. An N-linked (GlcNAc...) asparagine glycan is attached at Asn-82. Residue 147–151 (KGGTR) coordinates 3'-phosphoadenylyl sulfate. Substrate-binding positions include 169–175 (EPHFFDR) and 200–203 (KTPS). 2 residues coordinate 3'-phosphoadenylyl sulfate: Arg-228 and Ser-236. Asn-258 is a glycosylation site (N-linked (GlcNAc...) asparagine). A substrate-binding site is contributed by 268 to 269 (WS). Asn-329 carries N-linked (GlcNAc...) asparagine glycosylation. The cysteines at positions 336 and 348 are disulfide-linked. A 3'-phosphoadenylyl sulfate-binding site is contributed by 353-357 (KGRAH).

The protein belongs to the sulfotransferase 1 family.

The protein resides in the golgi apparatus membrane. The catalysed reaction is alpha-D-glucosaminyl-[heparan sulfate](n) + 3'-phosphoadenylyl sulfate = 3-sulfo-alpha-D-glucosaminyl-[heparan sulfate](n) + adenosine 3',5'-bisphosphate + H(+). In terms of biological role, sulfotransferase that utilizes 3'-phospho-5'-adenylyl sulfate (PAPS) to catalyze the transfer of a sulfo group to an N-unsubstituted glucosamine linked to a 2-O-sulfo iduronic acid unit on heparan sulfate. Catalyzes the O-sulfation of glucosamine in IdoUA2S-GlcNS and also in IdoUA2S-GlcNH2. Unlike HS3ST1/3-OST-1, does not convert non-anticoagulant heparan sulfate to anticoagulant heparan sulfate. This chain is Heparan sulfate glucosamine 3-O-sulfotransferase 3B1 (Hs3st3b1), found in Mus musculus (Mouse).